We begin with the raw amino-acid sequence, 245 residues long: Tyrosine recombinase XerD-like (245 aa).

Residues 1–72 (MITFISKFLA…AVNQFLFFLY (72 aa)) form the Core-binding (CB) domain. In terms of domain architecture, Tyr recombinase spans 90–245 (PLLTPAYQEV…PVTLEKYFKN (156 aa)). Residues K151 and R210 contribute to the active site. Residue Y242 is the O-(3'-phospho-DNA)-tyrosine intermediate of the active site.

Belongs to the 'phage' integrase family. XerD-like subfamily.

The protein resides in the cytoplasm. Its function is as follows. Putative tyrosine recombinase. Not involved in the cutting and rejoining of the recombining DNA molecules on dif(SL) site. This chain is Tyrosine recombinase XerD-like, found in Streptococcus mutans serotype c (strain ATCC 700610 / UA159).